Here is a 482-residue protein sequence, read N- to C-terminus: 23S rRNA (uracil(1939)-C(5))-methyltransferase RlmD (482 aa).

[4Fe-4S] cluster contacts are provided by Cys-85, Cys-95, Cys-98, and Cys-177. Gln-285, Phe-314, Asn-319, Glu-335, Asn-370, and Asp-391 together coordinate S-adenosyl-L-methionine. Residue Cys-438 is the Nucleophile of the active site.

It belongs to the class I-like SAM-binding methyltransferase superfamily. RNA M5U methyltransferase family. RlmD subfamily.

It catalyses the reaction uridine(1939) in 23S rRNA + S-adenosyl-L-methionine = 5-methyluridine(1939) in 23S rRNA + S-adenosyl-L-homocysteine + H(+). In terms of biological role, catalyzes the formation of 5-methyl-uridine at position 1939 (m5U1939) in 23S rRNA. This chain is 23S rRNA (uracil(1939)-C(5))-methyltransferase RlmD, found in Acidovorax sp. (strain JS42).